The chain runs to 36 residues: Photosystem I reaction center subunit VIII (36 aa).

Residues 8-28 (SFFVPLVCLVFPAIAMAFLFV) traverse the membrane as a helical segment.

This sequence belongs to the PsaI family.

It is found in the plastid. Its subcellular location is the chloroplast thylakoid membrane. In terms of biological role, may help in the organization of the PsaL subunit. The polypeptide is Photosystem I reaction center subunit VIII (Chara vulgaris (Common stonewort)).